The following is a 105-amino-acid chain: Endoribonuclease MazF1 (105 aa).

It belongs to the PemK/MazF family. As to quaternary structure, forms a complex with cognate antitoxin MazE1.

Toxic component of a type II toxin-antitoxin (TA) system. Acts as an endoribonuclease on single-strand RNA, cleaving between the first and second bases in the sequence UCGCU. Neutralized by coexpression with cognate antitoxin MazE1. The chain is Endoribonuclease MazF1 (mazF1) from Mycobacterium bovis (strain ATCC BAA-935 / AF2122/97).